The chain runs to 443 residues: MSEMTPREIVSELDSYIIGQHSAKRAVAIALRNRWRRMQLGEALRHEVTPKNILMIGPTGVGKTEIARRLAKLANAPFIKVEATKFTEVGYVGKEVDSIIRDLTDSAMKMIRAQSIEKNRYRAEEMAEERILDALIPPAKNNWGQTEQTNESSPARQTFRKKLREGELDDKEIEIELAASPMGVEIMAPPGMEEMTSQLQSMFQNLGGQKTKPRKVKIKDAFKQLIEEEAAKLVNPEELKQQAIDAVEQNGIVFIDEIDKICKRGESSGPDVSREGVQRDLLPLIEGCTVNTKHGMVKTDHILFIASGAFQVSSPADLIPELQGRLPIRVELQALTTEDFERILTEPSASLTEQYQALMATEGVNISFSADGIRRIAEAAWQVNESAENIGARRLHTVMERLMEEISFDASEMHGTAIAIDADYVRNHLDELVADEDLSRFIL.

Residues I18, 60–65 (GVGKTE), D256, E321, and R393 each bind ATP.

The protein belongs to the ClpX chaperone family. HslU subfamily. As to quaternary structure, a double ring-shaped homohexamer of HslV is capped on each side by a ring-shaped HslU homohexamer. The assembly of the HslU/HslV complex is dependent on binding of ATP.

It localises to the cytoplasm. Functionally, ATPase subunit of a proteasome-like degradation complex; this subunit has chaperone activity. The binding of ATP and its subsequent hydrolysis by HslU are essential for unfolding of protein substrates subsequently hydrolyzed by HslV. HslU recognizes the N-terminal part of its protein substrates and unfolds these before they are guided to HslV for hydrolysis. This Edwardsiella ictaluri (strain 93-146) protein is ATP-dependent protease ATPase subunit HslU.